The sequence spans 1043 residues: MKTGCAAGSPGNEWIFFSSDERNTRSRKTMSNRALQRSAVLSAFVLLRAVTGFSGDGKAIWDKKQYVSPVNPSQLFLYDTFPKNFSWGVGTGAFQVEGSWKTDGRGPSIWDRYVYSHLRGVNGTDRSTDSYIFLEKDLLALDFLGVSFYQFSISWPRLFPNGTVAAVNAQGLRYYRALLDSLVLRNIEPIVTLYHWDLPLTLQEEYGGWKNATMIDLFNDYATYCFQTFGDRVKYWITIHNPYLVAWHGFGTGMHAPGEKGNLTAVYTVGHNLIKAHSKVWHNYDKNFRPHQKGWLSITLGSHWIEPNRTDNMEDVINCQHSMSSVLGWFANPIHGDGDYPEFMKTGAMIPEFSEAEKEEVRGTADFFAFSFGPNNFRPSNTVVKMGQNVSLNLRQVLNWIKLEYDDPQILISENGWFTDSYIKTEDTTAIYMMKNFLNQVLQAIKFDEIRVFGYTAWTLLDGFEWQDAYTTRRGLFYVDFNSEQKERKPKSSAHYYKQIIQDNGFPLKESTPDMKGRFPCDFSWGVTESVLKPEFTVSSPQFTDPHLYVWNVTGNRLLYRVEGVRLKTRPSQCTDYVSIKKRVEMLAKMKVTHYQFALDWTSILPTGNLSKVNRQVLRYYRCVVSEGLKLGVFPMVTLYHPTHSHLGLPLPLLSSGGWLNMNTAKAFQDYAELCFRELGDLVKLWITINEPNRLSDMYNRTSNDTYRAAHNLMIAHAQVWHLYDRQYRPVQHGAVSLSLHCDWAEPANPFVDSHWKAAERFLQFEIAWFADPLFKTGDYPSVMKEYIASKNQRGLSSSVLPRFTAKESRLVKGTVDFYALNHFTTRFVIHKQLNTNRSVADRDVQFLQDITRLSSPSRLAVTPWGVRKLLAWIRRNYRDRDIYITANGIDDLALEDDQIRKYYLEKYVQEALKAYLIDKVKIKGYYAFKLTEEKSKPRFGFFTSDFRAKSSVQFYSKLISSSGLPAENRSPACGQPAEDTDCTICSFLVEKKPLIFFGCCFISTLAVLLSITVFHHQKRRKFQKARNLQNIPLKKGHSRVFS.

At 1 to 994 (MKTGCAAGSP…ICSFLVEKKP (994 aa)) the chain is on the extracellular side. Glycosyl hydrolase-1 stretches follow at residues 77–506 (LYDT…DNGF) and 515–965 (MKGR…SSGL). Residues N84, N122, N161, N211, N262, N308, N389, N552, N609, N700, N704, and N837 are each glycosylated (N-linked (GlcNAc...) asparagine). The helical transmembrane segment at 995–1015 (LIFFGCCFISTLAVLLSITVF) threads the bilayer. Residues 1016–1043 (HHQKRRKFQKARNLQNIPLKKGHSRVFS) lie on the Cytoplasmic side of the membrane.

This sequence belongs to the glycosyl hydrolase 1 family. Klotho subfamily. As to quaternary structure, interacts with FGF19; this interaction is direct. Interacts (via C-terminus) with FGF21; this interaction is direct. Interacts with FGFR1 and FGFR4. Present in liver, muscle and white adipose tissue, but not in kidney (at protein level). Expressed in liver and pancreas, and at lower levels in skin, stomach, skeletal muscle, small intestine and lung.

The protein resides in the cell membrane. Its function is as follows. Contributes to the transcriptional repression of cholesterol 7-alpha-hydroxylase (CYP7A1), the rate-limiting enzyme in bile acid synthesis. Probably inactive as a glycosidase. Increases the ability of FGFR1 and FGFR4 to bind FGF21. The polypeptide is Beta-klotho (Klb) (Mus musculus (Mouse)).